The sequence spans 330 residues: Tryptophan--tRNA ligase (330 aa).

Residues 10–12 and 18–19 contribute to the ATP site; these read QTT and GN. The short motif at 11–19 is the 'HIGH' region element; the sequence is TTGALHLGN. Residue Asp134 coordinates L-tryptophan. ATP-binding positions include 146–148, Ile186, and 195–199; these read GED and KMSKS. The short motif at 195–199 is the 'KMSKS' region element; sequence KMSKS.

This sequence belongs to the class-I aminoacyl-tRNA synthetase family. Homodimer.

The protein localises to the cytoplasm. It carries out the reaction tRNA(Trp) + L-tryptophan + ATP = L-tryptophyl-tRNA(Trp) + AMP + diphosphate + H(+). In terms of biological role, catalyzes the attachment of tryptophan to tRNA(Trp). The protein is Tryptophan--tRNA ligase of Rickettsia typhi (strain ATCC VR-144 / Wilmington).